Reading from the N-terminus, the 508-residue chain is UBX domain-containing protein 4 (508 aa).

The interaction with UBQLN1 stretch occupies residues 1–200 (MLWFQGAIPA…PTEDLTVRVE (200 aa)). Topologically, residues 1-413 (MLWFQGAIPA…VHSSSGDFWT (413 aa)) are cytoplasmic. Positions 117-199 (GEASLANGSQ…RPTEDLTVRV (83 aa)) are disordered. A compositionally biased stretch (polar residues) spans 122 to 190 (ANGSQSEGSV…QEPSGCSNQR (69 aa)). In terms of domain architecture, UBX spans 315 to 393 (ERSTVARIQF…ELAPSASVVL (79 aa)). An intramembrane segment occupies 414-434 (LLGTVLYPFLAIWRLISNFLF). At 435–508 (SNPPPAQTSV…TWNGNSTQQM (74 aa)) the chain is on the cytoplasmic side. Residues 450 to 459 (ETSNLASSSN) show a composition bias toward polar residues. The segment at 450 to 508 (ETSNLASSSNSEKREPVRKRVLEKRGEDFKKEGKIYRLRTQDDGEDENNTWNGNSTQQM) is disordered. Basic and acidic residues predominate over residues 460–491 (SEKREPVRKRVLEKRGEDFKKEGKIYRLRTQD). Thr-489 bears the Phosphothreonine mark. The segment covering 498–508 (NTWNGNSTQQM) has biased composition (polar residues).

Directly interacts with VCP. Interacts with UBQLN1. Forms a complex with VCP and UBQLN1.

Its subcellular location is the endoplasmic reticulum membrane. The protein localises to the nucleus envelope. In terms of biological role, involved in endoplasmic reticulum-associated protein degradation (ERAD). Acts as a platform to recruit both UBQLN1 and VCP to the ER during ERAD. The protein is UBX domain-containing protein 4 (UBXN4) of Bos taurus (Bovine).